The chain runs to 214 residues: Probable GTP-binding protein EngB (214 aa).

An EngB-type G domain is found at 24–199 (GGYEVAFAGR…RGIVGGWLGL (176 aa)). Residues 32–39 (GRSNAGKS), 59–63 (GRTQQ), 77–80 (DLPG), 144–147 (TKAD), and 178–180 (YSG) each bind GTP. Residues serine 39 and threonine 61 each coordinate Mg(2+).

Belongs to the TRAFAC class TrmE-Era-EngA-EngB-Septin-like GTPase superfamily. EngB GTPase family. It depends on Mg(2+) as a cofactor.

In terms of biological role, necessary for normal cell division and for the maintenance of normal septation. The chain is Probable GTP-binding protein EngB from Xanthomonas axonopodis pv. citri (strain 306).